We begin with the raw amino-acid sequence, 1275 residues long: Inner capsid protein lambda-1 (1275 aa).

Basic residues predominate over residues 1–12 (MKRIPRKTKGKS). The segment at 1–149 (MKRIPRKTKG…DNEGGSNQKP (149 aa)) is disordered. Composition is skewed to basic and acidic residues over residues 18 to 35 (DSTE…DKQN) and 75 to 117 (NNDE…DKSK). Residues 118-149 (AQVTYSDTGINNANELSRSGNVDNEGGSNQKP) are compositionally biased toward polar residues. The segment at 181-203 (YQCHVCSAVLFSPLDLDAHVASH) adopts a C2H2-type zinc-finger fold.

Belongs to the turreted BTV-fold inner capsid family. In terms of assembly, homodecamer; each decamer is made up of two conformers of VP2, called VP2A and VP2B. 12 homodecamers assemble to form an icosahedral capsid. Interacts with protein mu-NS; in viral inclusions. Requires Mg(2+) as cofactor. Mn(2+) serves as cofactor.

It is found in the virion. It carries out the reaction ATP + H2O = ADP + phosphate + H(+). In terms of biological role, inner capsid protein that self-assembles to form an icosahedral capsid with a T=2 symmetry, which consists of 120 copies of VP2, with channels at each of its five-fold vertices. This capsid constitutes the innermost concentric layer of the viral mature particle. Its function is as follows. Displays NTPase, RNA 5'-triphosphatase (RTPase) and RNA helicase activities and probably participates in transcription of the viral genome. Helicase activity might be involved in unwinding or reannealing dsRNA during RNA synthesis. RTPase enzymatic activity represents the first step in RNA capping, which yields a 5'-diphosphorylated plus-strand RNA. The polypeptide is Inner capsid protein lambda-1 (L3) (Reovirus type 1 (strain Lang) (T1L)).